The following is a 726-amino-acid chain: Catalase-peroxidase (726 aa).

Residues 1–33 are disordered; sequence MSTTDDTHNTLSTGKCPFHQGGHDRSAGAGTAS. A cross-link (tryptophyl-tyrosyl-methioninium (Trp-Tyr) (with M-252)) is located at residues 105-226; sequence WHGAGTYRSI…LGATEMGLIY (122 aa). The active-site Proton acceptor is the His-106. Positions 226 to 252 form a cross-link, tryptophyl-tyrosyl-methioninium (Tyr-Met) (with W-105); that stretch reads YVNPEGPDHSGEPLSAAAAIRATFGNM. His-267 is a heme b binding site.

This sequence belongs to the peroxidase family. Peroxidase/catalase subfamily. In terms of assembly, homodimer or homotetramer. It depends on heme b as a cofactor. Post-translationally, formation of the three residue Trp-Tyr-Met cross-link is important for the catalase, but not the peroxidase activity of the enzyme.

It catalyses the reaction H2O2 + AH2 = A + 2 H2O. The enzyme catalyses 2 H2O2 = O2 + 2 H2O. Functionally, bifunctional enzyme with both catalase and broad-spectrum peroxidase activity. The polypeptide is Catalase-peroxidase (Salmonella schwarzengrund (strain CVM19633)).